The following is a 100-amino-acid chain: Urease subunit gamma (100 aa).

Belongs to the urease gamma subunit family. In terms of assembly, heterotrimer of UreA (gamma), UreB (beta) and UreC (alpha) subunits. Three heterotrimers associate to form the active enzyme.

The protein localises to the cytoplasm. It carries out the reaction urea + 2 H2O + H(+) = hydrogencarbonate + 2 NH4(+). Its pathway is nitrogen metabolism; urea degradation; CO(2) and NH(3) from urea (urease route): step 1/1. The sequence is that of Urease subunit gamma from Pseudomonas fluorescens (strain Pf0-1).